Here is a 32-residue protein sequence, read N- to C-terminus: Mu-theraphotoxin-Se1a (32 aa).

Intrachain disulfides connect C2–C17, C9–C22, and C16–C28.

This sequence belongs to the neurotoxin 10 (Hwtx-1) family. Expressed by the venom gland.

It is found in the secreted. In terms of biological role, voltage-gated sodium channel Nav1.7/SCN9A inhibitor. This Selenocosmia effera (Tarantula spider) protein is Mu-theraphotoxin-Se1a.